A 3961-amino-acid chain; its full sequence is Replicase polyprotein 1ab (3961 aa).

The C4-type; atypical zinc finger occupies 8–28 (CTCTPNARVFVAEGQVYCTRC). Positions 69-180 (ECSPTGACWL…EDFCPFECAM (112 aa)) constitute a Peptidase C31 domain. The PCP1-alpha stretch occupies residues 69-182 (ECSPTGACWL…FCPFECAMAD (114 aa)). Active-site for Nsp1-alpha papain-like cysteine proteinase activity residues include Cys-76 and His-146. Positions 199–200 (VS) are important for host EIF2AK2 inhibition. The interval 263–382 (DTVPEGNCWW…IFRFGSHKWY (120 aa)) is PCP1-beta. Residues 263–383 (DTVPEGNCWW…FRFGSHKWYG (121 aa)) enclose the Peptidase C32 domain. Catalysis depends on for Nsp1-beta papain-like cysteine proteinase activity residues Cys-270 and His-339. The segment at 426 to 513 (LKLYSPPAEG…GEHWTVSVNP (88 aa)) is OTU-like. Positions 428 to 535 (LYSPPAEGNC…QGCCEHKGGL (108 aa)) constitute a Peptidase C33 domain. Residues Cys-437 and His-506 each act as for Nsp2 cysteine proteinase activity in the active site. The segment covering 810–819 (WTPPPPPPRV) has biased composition (pro residues). Disordered stretches follow at residues 810-875 (WTPP…FPTP), 899-918 (TPLDGSAPVPAPRRTVSRPM), and 1148-1191 (TGEL…PADT). 7 consecutive transmembrane segments (helical) span residues 1266–1286 (FCLFLCYSYPFFGFAPLLGVF), 1296–1316 (GVFGCWLAFAVGLFKPVSDPV), 1368–1388 (VWHFLLRFGIVADCILAGAYV), 1583–1603 (LVAALHVACSMALHMLAGVYV), 1648–1668 (LTALVAGFGLQEIALVVLIFV), 1685–1705 (CILLAIASYVWVPLTWLLCVF), and 1719–1739 (ILWLVFFLISVNIPSGILAVV). The segment at 1266 to 1388 (FCLFLCYSYP…ADCILAGAYV (123 aa)) is HD1. The HD2 stretch occupies residues 1583-1745 (LVAALHVACS…LAVVLLVSLW (163 aa)). Residues 1810–2013 (GAFRTQKPSL…ALLAAKPELE (204 aa)) form the Peptidase S32 domain. Catalysis depends on charge relay system; for 3C-like serine proteinase activity residues His-1848, Asp-1873, and Ser-1927. Transmembrane regions (helical) follow at residues 2036 to 2056 (WTPLVAVGFFILNEILPAVLV), 2060 to 2080 (FSFGMFVLSWLTPWSAQVLMI), 2092 to 2112 (LSLGFYSLGAVTSFVADLAVT), 2137 to 2157 (SPVPVIACGVVHLLAIILYLF), and 2162 to 2182 (LHYVLVGDGVFSSAFFLRYFA). Residues 2036 to 2157 (WTPLVAVGFF…HLLAIILYLF (122 aa)) are HD3. Residues 2488–2651 (IIDKLQGLTK…LPYKLYPVRG (164 aa)) form the NiRAN domain. One can recognise a RdRp catalytic domain in the interval 2890 to 3024 (GRCLEADLAS…YAESPSMPNY (135 aa)). One can recognise an AV ZBD domain in the interval 3145 to 3208 (GKKSRMCGYC…PPLGKGTSPL (64 aa)). Zn(2+) contacts are provided by Cys-3151, Cys-3154, Cys-3164, Cys-3169, His-3172, His-3174, His-3176, His-3178, Cys-3185, His-3187, Cys-3194, and Cys-3197. Residues 3265–3417 (ASTALLPTCK…VFDIMPQTQL (153 aa)) form the (+)RNA virus helicase ATP-binding domain. ATP is bound at residue 3293–3300 (GPPGAGKT). The region spanning 3418-3546 (KTIWRFGQNI…AVHRDEQLIV (129 aa)) is the (+)RNA virus helicase C-terminal domain. Residues 3585 to 3681 (EGSSSPLPKV…LTKFVRGEAQ (97 aa)) enclose the AV-Nsp11N/CoV-Nsp15M domain. Positions 3683 to 3805 (LPETVFSTGR…MVWKGKTAYF (123 aa)) constitute a NendoU domain. Residues His-3714, His-3729, and Lys-3758 contribute to the active site.

The protein belongs to the arteriviridae polyprotein family. In terms of assembly, nsp1-alpha papain-like: Interacts with host RNF31. Interacts with host EIF2AK2; this interaction occurs in host stress granules and leads to EIF2AK2 inhibition. Interacts with host G3BP1; this interaction probably plays a role in Nsp1-beta-mediated inhibition of host EIF2AK2. As to quaternary structure, interacts with host DDX18; this interaction redistributes host DDX18 to the cytoplasm. In terms of assembly, interacts with host IFITM1. Interacts with host DDX5. As to quaternary structure, interacts with host OTULIN. In terms of assembly, interacts with host LGALS3. Specific enzymatic cleavages in vivo by its own proteases yield mature proteins. Nsp1 is autocleaved into two subunits, Nsp1-alpha and Nsp1-beta. There are two alternative pathways for processing. Either nsp4-5 is cleaved, which represents the major pathway or the nsp5-6 and nsp6-7 are processed, which represents the minor pathway. The major pathway occurs when nsp2 acts as a cofactor for nsp4.

It is found in the host nucleus. The protein resides in the host cytoplasm. It localises to the host membrane. Its subcellular location is the host endoplasmic reticulum. The protein localises to the host perinuclear region. The enzyme catalyses RNA(n) + a ribonucleoside 5'-triphosphate = RNA(n+1) + diphosphate. It catalyses the reaction ATP + H2O = ADP + phosphate + H(+). The catalysed reaction is Thiol-dependent hydrolysis of ester, thioester, amide, peptide and isopeptide bonds formed by the C-terminal Gly of ubiquitin (a 76-residue protein attached to proteins as an intracellular targeting signal).. It carries out the reaction uridylyl-uridylyl-ribonucleotide-RNA = a 3'-end uridylyl-2',3'-cyclophospho-uridine-RNA + a 5'-end dephospho-ribonucleoside-RNA. Its function is as follows. Contains the activities necessary for the transcription of negative stranded RNA, leader RNA, subgenomic mRNAs and progeny virion RNA as well as proteinases responsible for the cleavage of the polyprotein into functional products. Inhibits host IFN-beta production. Plays a role in the degradation of the host transcriptional activator CREBBP protein. The degradation of host CREBBP which is a key component of the IFN enhanceosome is likely responsible for the inhibition of interferon mediated by Nsp1-alpha. Also participates in the inhibition of host NF-kappa-B activation by counteracting LUBAC-dependent induction of NF-kappa-B. Reduces host NEMO ubiquitination by blocking the interaction between the two LUBAC complex components RNF31 and SHARPIN. Functionally, plays a role in blocking host mRNA nuclear export to the cytoplasm and subversion of host protein synthesis. Additionally, inhibits the interferon-activated JAK/STAT signal transduction by mediating the ubiquitination and subsequent proteasomal degradation of host KPNA1. Repurposes the host antiviral stress granules into a proviral platform to counteract the EIF2AK2/PKR restriction, thereby regulating the host inflammatory response. In terms of biological role, multifunctional protein that acts as a viral protease and as a viral antagonist of host immune response. Cleaves the nsp2/nsp3 site in the viral polyprotein. Displays deubiquitinating activity that cleaves both ubiquitinated and ISGylated products and therefore inhibits ubiquitin and ISG15-dependent host innate immunity. Also deubiquinates host NFKBIA, thereby interfering with NFKBIA degradation and impairing subsequent NF-kappa-B activation. Its function is as follows. Plays a role in the inhibition of the immune response by interacting with host IFITM1. This interaction leads to the proteasomal degradation of the IFN-induced antiviral protein IFITM1. Cleaves the majority of cleavage sites present in the C-terminus of the polyprotein. Triggers host apoptosis through caspase-3, -8, and -9 activations. Subverts host innate immune responses through its protease activity. Targets the NF-kappa-B essential modulator NEMO and mediates its cleavage. Blocks host interferon beta induction and downstream signaling by cleaving mitochondrial MAVS, dislodging it from the mitochondria. Impairs host defense by cleaving host mRNA-decapping enzyme DCP1A to attenuate its antiviral activity. Functionally, plays a role in the initial induction of autophagosomes from host endoplasmic reticulum. In terms of biological role, plays a role in the inhibition of host STAT3 signaling pathway by inducing the degradation of STAT3. Its function is as follows. Responsible for replication and transcription of the viral RNA genome. Displays RNA and DNA duplex-unwinding activities with 5' to 3' polarity. Functionally, plays a role in viral transcription/replication and prevents the simultaneous activation of host cell dsRNA sensors, such as MDA5/IFIH1, OAS, PKR and NLRP3 inflammasome. Acts by degrading the 5'-polyuridines generated during replication of the poly(A) region of viral genomic and subgenomic RNAs. Catalyzes a two-step reaction in which a 2'3'-cyclic phosphate (2'3'-cP) is first generated by 2'-O transesterification, which is then hydrolyzed to a 3'-phosphate (3'-P). If not degraded, poly(U) RNA would hybridize with poly(A) RNA tails and activate host dsRNA sensors. Also plays a role in the inhibition of host type I interferon production by recruiting host OTULIN to promote removal of linear ubiquitination targeting host NEMO. This is Replicase polyprotein 1ab (rep) from Porcine reproductive and respiratory syndrome virus (strain HB-1) (PRRSV).